The chain runs to 303 residues: MIKQRTLKNVVRATGVGVHTGEKVYLTLRPAPPNTGIIFCRTDLDPVVQIPARVNYIGDTSLSTCLTKGDVRIATVEHLLSALAGVGVDNLYIDLTSPELPIMDGSAGPFVFLIQSAGIEEQNAPKEFIRIKQRVKIEEADKSVMVEPYNGFKISFGIDFDHPLFNEHNQNATLDFSSTSYVKEVSRARTFGFLSDYEFIRKNNLALGASLDNALVLDEYKILNQDGLRYPDEFVKHKILDVIGDLYLLGRSLIGSFSGVKSGHTLNSQLLKKLLATKSAWEIVTFKDPSELPFAYTPVAMTA.

Zn(2+)-binding residues include His78, His237, and Asp241. The Proton donor role is filled by His264.

Belongs to the LpxC family. Zn(2+) serves as cofactor.

The enzyme catalyses a UDP-3-O-[(3R)-3-hydroxyacyl]-N-acetyl-alpha-D-glucosamine + H2O = a UDP-3-O-[(3R)-3-hydroxyacyl]-alpha-D-glucosamine + acetate. The protein operates within glycolipid biosynthesis; lipid IV(A) biosynthesis; lipid IV(A) from (3R)-3-hydroxytetradecanoyl-[acyl-carrier-protein] and UDP-N-acetyl-alpha-D-glucosamine: step 2/6. Its function is as follows. Catalyzes the hydrolysis of UDP-3-O-myristoyl-N-acetylglucosamine to form UDP-3-O-myristoylglucosamine and acetate, the committed step in lipid A biosynthesis. The chain is UDP-3-O-acyl-N-acetylglucosamine deacetylase from Coxiella burnetii (strain CbuK_Q154) (Coxiella burnetii (strain Q154)).